A 287-amino-acid polypeptide reads, in one-letter code: MSQASPLPRYAVIGNPVAHSRSPQIHAMFSSQTGKPLQYERLLAPVDGFAATVQAFREQGGLGLNVTVPFKEEACQLAGAHLSERARLAGAVNTLWLRDGAWHGCNTDGVGLVSDLLRLGVVLEGARVLLVGAGGAARGVLQPLAAAGCARIHIVNRSAQRAHDLAAGWAAAGAVPGTRVTAGALAEAGVAGGWNVVVNATASSLQGAAPELPRGLYAPDALAYDMMYAAHPTAFMRQATDDGAARTADGLGMLVGQAAESFLIWHGVRPDPSPVLTALRATLLAKD.

Residues 20 to 22 (SRS) and Thr-67 contribute to the shikimate site. Lys-71 acts as the Proton acceptor in catalysis. Glu-84 provides a ligand contact to NADP(+). Asn-93 and Asp-108 together coordinate shikimate. Residues 132 to 136 (GAGGA) and Met-226 contribute to the NADP(+) site. Shikimate is bound at residue Tyr-228. NADP(+) is bound at residue Gly-250.

The protein belongs to the shikimate dehydrogenase family. Homodimer.

The enzyme catalyses shikimate + NADP(+) = 3-dehydroshikimate + NADPH + H(+). The protein operates within metabolic intermediate biosynthesis; chorismate biosynthesis; chorismate from D-erythrose 4-phosphate and phosphoenolpyruvate: step 4/7. Functionally, involved in the biosynthesis of the chorismate, which leads to the biosynthesis of aromatic amino acids. Catalyzes the reversible NADPH linked reduction of 3-dehydroshikimate (DHSA) to yield shikimate (SA). This chain is Shikimate dehydrogenase (NADP(+)), found in Bordetella petrii (strain ATCC BAA-461 / DSM 12804 / CCUG 43448).